Consider the following 428-residue polypeptide: Mitochondrial import inner membrane translocase subunit TIM50-C (428 aa).

Residues 59 to 79 (LFTCTALPAAAPALFSILHTA) traverse the membrane as a helical segment. The Mitochondrial intermembrane segment spans residues 80 to 428 (RGYSSTTKQE…KQWSRNILGR (349 aa)). A disordered region spans residues 112 to 138 (FPQTSPEVDSNAEQERKKREEEEEKEN). The segment covering 124–138 (EQERKKREEEEEKEN) has biased composition (basic and acidic residues). Residues 224-367 (YVQPRYTLVL…LDLIAFLKII (144 aa)) enclose the FCP1 homology domain.

The protein belongs to the TIM50 family. In terms of assembly, component of the TIM23 complex at least composed of Tim23, Tim17 (Tim17a1, Tim17a2 or Tim17b1) and a Tim50.

The protein resides in the mitochondrion inner membrane. Its function is as follows. Essential component of the TIM23 complex, a complex that mediates the translocation of transit peptide-containing proteins across the mitochondrial inner membrane. The chain is Mitochondrial import inner membrane translocase subunit TIM50-C (ttm50) from Drosophila melanogaster (Fruit fly).